Here is an 867-residue protein sequence, read N- to C-terminus: Protein translocase subunit SecA 1 (867 aa).

ATP-binding positions include Gln-86, Gly-104–Thr-108, and Asp-493.

This sequence belongs to the SecA family. As to quaternary structure, monomer and homodimer. Part of the essential Sec protein translocation apparatus which comprises SecA, SecYEG and auxiliary proteins SecDF. Other proteins may also be involved.

The protein resides in the cell membrane. The protein localises to the cytoplasm. The enzyme catalyses ATP + H2O + cellular proteinSide 1 = ADP + phosphate + cellular proteinSide 2.. Part of the Sec protein translocase complex. Interacts with the SecYEG preprotein conducting channel. Has a central role in coupling the hydrolysis of ATP to the transfer of proteins into and across the cell membrane, serving as an ATP-driven molecular motor driving the stepwise translocation of polypeptide chains across the membrane. This chain is Protein translocase subunit SecA 1, found in Corynebacterium jeikeium (strain K411).